A 280-amino-acid chain; its full sequence is Four and a half LIM domains protein 3 (280 aa).

Ser2 is subject to N-acetylserine. The segment at 7 to 31 (CAKCSESLYGRKYIQTDDGPYCVPC) adopts a C4-type zinc-finger fold. LIM zinc-binding domains lie at 40–92 (CAEC…CNDC) and 101–153 (CSAC…CVPC). Lys157 carries the post-translational modification N6-acetyllysine. 2 consecutive LIM zinc-binding domains span residues 162–212 (CARC…CVTC) and 221–275 (CSSC…CQGC). Lys235 is modified (N6-acetyllysine).

In terms of assembly, interacts with SOX15; the interaction recruits FHL3 to FOXK1 promoters where it acts as a transcriptional coactivator of FOXK1.

It localises to the nucleus. The protein localises to the cytoplasm. Recruited by SOX15 to FOXK1 promoters where it acts as a transcriptional coactivator of FOXK1. The protein is Four and a half LIM domains protein 3 (FHL3) of Bos taurus (Bovine).